A 628-amino-acid polypeptide reads, in one-letter code: E3 SUMO-protein ligase PIAS3 (628 aa).

An interaction with CCAR2 region spans residues 1–200 (MAELGELKHM…QLRFCLCETS (200 aa)). An SAP domain is found at 11-45 (VMSFRVSELQVLLGFAGRNKSGRKHELLAKALHLL). The LXXLL motif signature appears at 19–23 (LQVLL). Residues K46 and K56 each participate in a glycyl lysine isopeptide (Lys-Gly) (interchain with G-Cter in SUMO2) cross-link. Positions 72–95 (PSDLSLLSLPPGTSPVGSPSPLAS) are disordered. Positions 115–280 (MHPPLPQPVH…SLSVYLVRQL (166 aa)) constitute a PINIT domain. Glycyl lysine isopeptide (Lys-Gly) (interchain with G-Cter in SUMO2) cross-links involve residues K230 and K307. Residues 312 to 393 (PDSEVATTSL…FMEILNSCSD (82 aa)) form an SP-RING-type zinc finger. 4 residues coordinate Zn(2+): C343, H345, C366, and C369. The segment at 450-460 (LTIESSSDEED) is SUMO1-binding. Residues K466 and K482 each participate in a glycyl lysine isopeptide (Lys-Gly) (interchain with G-Cter in SUMO2) cross-link. The segment at 573 to 618 (LAPTLGSSHRSATPAPAPGRVSSIVAPGSSLREGHGGPLPSGPSLT) is disordered.

It belongs to the PIAS family. Binds SUMO1 and UBE2I. Interacts with AR, BCL11A, GFI1, HMGA2, IRF1, MITF, NCOA2, as well as with STAT3, after treatment with IL6, CNTF or OSM and with STAT5, after PRL stimulation. Interacts with PLAG1. Interacts with ZFHX3. Interacts with MTA1. Interacts with CCAR2 (via N-terminus). Interacts with TRIM8. Interacts with PRDM1. Post-translationally, sumoylated. Widely expressed, with highest levels in lung, kidney and spleen.

The protein localises to the cytoplasm. The protein resides in the nucleus. Its subcellular location is the nucleus speckle. The protein operates within protein modification; protein sumoylation. Functionally, functions as an E3-type small ubiquitin-like modifier (SUMO) ligase, stabilizing the interaction between UBE2I and the substrate, and as a SUMO-tethering factor. Plays a crucial role as a transcriptional coregulation in various cellular pathways, including the STAT pathway and the steroid hormone signaling pathway. The effects of this transcriptional coregulation, transactivation or silencing, may vary depending upon the biological context. Enhances the sumoylation of MTA1 and may participate in its paralog-selective sumoylation. Sumoylates CCAR2 which promotes its interaction with SIRT1. Diminishes the sumoylation of ZFHX3 by preventing the colocalization of ZFHX3 with SUMO1 in the nucleus. This chain is E3 SUMO-protein ligase PIAS3 (Pias3), found in Rattus norvegicus (Rat).